The sequence spans 590 residues: Potassium-transporting ATPase potassium-binding subunit (590 aa).

The next 4 helical transmembrane spans lie at 3 to 23 (AFLL…RPLG), 63 to 83 (HYAL…YALQ), 134 to 154 (GLAV…IALI), and 177 to 197 (LYVL…QGAI). The tract at residues 217–244 (PKTDAQGNPIKDAQGNPVTEKATTQKQT) is disordered. A run of 8 helical transmembrane segments spans residues 284–304 (FVQM…FGAM), 312–332 (WAVL…EMWA), 359–379 (FGVV…CGAV), 388–408 (ALGG…FGGV), 411–431 (GLYG…LMIG), 450–470 (SIAI…AVLA), 515–535 (VALG…VLAM), and 558–578 (LFVV…YIPA).

It belongs to the KdpA family. The system is composed of three essential subunits: KdpA, KdpB and KdpC.

The protein localises to the cell inner membrane. Part of the high-affinity ATP-driven potassium transport (or Kdp) system, which catalyzes the hydrolysis of ATP coupled with the electrogenic transport of potassium into the cytoplasm. This subunit binds the periplasmic potassium ions and delivers the ions to the membrane domain of KdpB through an intramembrane tunnel. The sequence is that of Potassium-transporting ATPase potassium-binding subunit from Ralstonia nicotianae (strain ATCC BAA-1114 / GMI1000) (Ralstonia solanacearum).